The chain runs to 324 residues: NAC domain-containing protein 21/22 (324 aa).

The region spanning 19-171 is the NAC domain; that stretch reads LPPGFRFHPK…DWVLCRVFHK (153 aa). Residues 120–137 carry the Bipartite nuclear localization signal motif; the sequence is RKTLVFYQGRAPRGRKTD.

As to quaternary structure, dimer. Interacts with SINAT5. Post-translationally, ubiquitinated. The interaction with SINAT5 mediate its proteasome-dependent degradation. In terms of tissue distribution, predominantly expressed in the root tip and in lateral root initiation sites. Also detected in expanding cotyledon, and in leaf primordia.

Its subcellular location is the nucleus. Transcriptional activator that mediates auxin signaling to promote lateral root development. Activates the expression of two downstream auxin-responsive genes, DBP and AIR3. This Arabidopsis thaliana (Mouse-ear cress) protein is NAC domain-containing protein 21/22 (NAC021).